A 261-amino-acid chain; its full sequence is MSRIRQAFAALDGGKALIPYITVGDPDIRTTLALMHGMVANGADILELGVPFSDPMADGPVIQRAAERALANGISLRDVLDVVRKFRETDTQTPVVLMGYLNPVHKMGYREFAQEAAKAGVDGVLTVDSPVETIDPLYRELKDNGVDCIFLIAPTTTEDRIKTIAELAGGFVYYVSLKGVTGAASLDTDEVSRKIEYLHQYIDIPIGVGFGISNAESARKIGRVAEAVIVGSRIVKEIENNAGNEAAVVGALVKELKDAVR.

Residues glutamate 47 and aspartate 58 each act as proton acceptor in the active site.

The protein belongs to the TrpA family. As to quaternary structure, tetramer of two alpha and two beta chains.

The catalysed reaction is (1S,2R)-1-C-(indol-3-yl)glycerol 3-phosphate + L-serine = D-glyceraldehyde 3-phosphate + L-tryptophan + H2O. The protein operates within amino-acid biosynthesis; L-tryptophan biosynthesis; L-tryptophan from chorismate: step 5/5. The alpha subunit is responsible for the aldol cleavage of indoleglycerol phosphate to indole and glyceraldehyde 3-phosphate. The sequence is that of Tryptophan synthase alpha chain from Neisseria meningitidis serogroup A / serotype 4A (strain DSM 15465 / Z2491).